The primary structure comprises 2273 residues: Acetyl-CoA carboxylase, mitochondrial (2273 aa).

Residues 1-104 constitute a mitochondrion transit peptide; that stretch reads KGKTITHGQS…RGNIHKHTRL (104 aa). The Biotin carboxylation domain occupies 134–635; the sequence is VISKILIANN…STGWLDDLIL (502 aa). In terms of domain architecture, ATP-grasp spans 292-484; it reads KTNFVSVPDD…LPATQLQIAM (193 aa). 332–337 is an ATP binding site; it reads GGGGKG. R459 is a catalytic residue. The Biotinyl-binding domain maps to 763-837; sequence LEAELNPTQV…EAGDVIAKLT (75 aa). N6-biotinyllysine is present on K804. One can recognise a CoA carboxyltransferase N-terminal domain in the interval 1532–1867; it reads PYSVKDWLQP…KRDMSPPLLE (336 aa). Residues 1532 to 2187 are carboxyltransferase; it reads PYSVKDWLQP…EGQVIKRLQK (656 aa). Positions 1776, 2080, and 2082 each coordinate CoA. The 317-residue stretch at 1871–2187 folds into the CoA carboxyltransferase C-terminal domain; that stretch reads RWDRDVDFKP…EGQVIKRLQK (317 aa).

Biotin serves as cofactor.

The protein resides in the mitochondrion. It carries out the reaction hydrogencarbonate + acetyl-CoA + ATP = malonyl-CoA + ADP + phosphate + H(+). The catalysed reaction is N(6)-biotinyl-L-lysyl-[protein] + hydrogencarbonate + ATP = N(6)-carboxybiotinyl-L-lysyl-[protein] + ADP + phosphate + H(+). It participates in lipid metabolism; malonyl-CoA biosynthesis; malonyl-CoA from acetyl-CoA: step 1/1. In terms of biological role, catalyzes the rate-limiting reaction in the mitochondrial fatty acid synthesis (FAS) type II pathway. Responsible for the production of the mitochondrial malonyl-CoA, used for the biosynthesis of the cofactor lipoic acid. This protein carries three functions: biotin carboxyl carrier protein, biotin carboxylase, and carboxyltransferase. The polypeptide is Acetyl-CoA carboxylase, mitochondrial (HFA1) (Saccharomyces cerevisiae (strain JAY291) (Baker's yeast)).